Consider the following 44-residue polypeptide: Conotoxin Fi11.11 (44 aa).

Intrachain disulfides connect Cys-1-Cys-15, Cys-8-Cys-20, Cys-14-Cys-24, and Cys-19-Cys-28. An Asparagine amide modification is found at Asn-30. Positions 35–44 (QVPLKSFGQR) are excised as a propeptide.

It belongs to the conotoxin I2 superfamily. Expressed by the venom duct.

It is found in the secreted. The chain is Conotoxin Fi11.11 from Conus figulinus (Fig cone).